Consider the following 431-residue polypeptide: Na(+)-translocating NADH-quinone reductase subunit F (431 aa).

A helical transmembrane segment spans residues 10–30 (ISIASLVFCVIGLILSGVILI). The 93-residue stretch at 41–133 (CKLKINNDDS…DMNLEIEERY (93 aa)) folds into the 2Fe-2S ferredoxin-type domain. The [2Fe-2S] cluster site is built by Cys-76, Cys-82, Cys-85, and Cys-117. An FAD-binding FR-type domain is found at 136–286 (ASSWEGTVVS…SGPYGESFMK (151 aa)).

This sequence belongs to the NqrF family. Composed of six subunits; NqrA, NqrB, NqrC, NqrD, NqrE and NqrF. [2Fe-2S] cluster is required as a cofactor. FAD serves as cofactor.

The protein resides in the cell inner membrane. It carries out the reaction a ubiquinone + n Na(+)(in) + NADH + H(+) = a ubiquinol + n Na(+)(out) + NAD(+). Its function is as follows. NQR complex catalyzes the reduction of ubiquinone-1 to ubiquinol by two successive reactions, coupled with the transport of Na(+) ions from the cytoplasm to the periplasm. The first step is catalyzed by NqrF, which accepts electrons from NADH and reduces ubiquinone-1 to ubisemiquinone by a one-electron transfer pathway. The polypeptide is Na(+)-translocating NADH-quinone reductase subunit F (Chlamydia felis (strain Fe/C-56) (Chlamydophila felis)).